A 79-amino-acid polypeptide reads, in one-letter code: Probable [Fe-S]-dependent transcriptional repressor (79 aa).

Cys-56, Cys-61, Cys-64, and Cys-71 together coordinate iron-sulfur cluster.

The protein belongs to the FeoC family.

May function as a transcriptional regulator that controls feoABC expression. This is Probable [Fe-S]-dependent transcriptional repressor from Klebsiella pneumoniae subsp. pneumoniae (strain ATCC 700721 / MGH 78578).